Reading from the N-terminus, the 408-residue chain is Argininosuccinate synthase (408 aa).

ATP-binding positions include 11–19 (AYSGGLDTS) and Ala-38. L-citrulline contacts are provided by Tyr-91 and Ser-96. ATP is bound at residue Gly-121. L-aspartate contacts are provided by Thr-123, Asn-127, and Asp-128. Asn-127 serves as a coordination point for L-citrulline. L-citrulline is bound by residues Arg-131, Ser-182, Ser-191, Glu-267, and Tyr-279.

Belongs to the argininosuccinate synthase family. Type 1 subfamily. As to quaternary structure, homotetramer.

The protein localises to the cytoplasm. It catalyses the reaction L-citrulline + L-aspartate + ATP = 2-(N(omega)-L-arginino)succinate + AMP + diphosphate + H(+). It functions in the pathway amino-acid biosynthesis; L-arginine biosynthesis; L-arginine from L-ornithine and carbamoyl phosphate: step 2/3. This chain is Argininosuccinate synthase, found in Azorhizobium caulinodans (strain ATCC 43989 / DSM 5975 / JCM 20966 / LMG 6465 / NBRC 14845 / NCIMB 13405 / ORS 571).